The chain runs to 329 residues: NTD biosynthesis operon regulator NtdR (329 aa).

Residues 2–56 enclose the HTH lacI-type domain; that stretch reads PTIDEIAKLCNVSKTTVSRVLNNHPYVSKEKRDMILKAINELDYTPNYLARNFRR. Residues 4–23 constitute a DNA-binding region (H-T-H motif); the sequence is IDEIAKLCNVSKTTVSRVLN.

Functionally, positively regulates the ntdABC operon and negatively regulates its own transcription. Binds to NTD to induce ntdABC transcription. This chain is NTD biosynthesis operon regulator NtdR (ntdR), found in Bacillus subtilis (strain 168).